Reading from the N-terminus, the 235-residue chain is MKNKIKSLCLIKKKKSGRSRGKISVRHIGKKHKKFYRKIDFKRDKYNIKGIVESIHYDPNRNARIALIKYLDGEKRYIIKTNNLEISNFVVSSLNKISLNSGNSTIIKNINIGTLINCVEIFPKIGGIFSRSSGSESEIIFKDNKFGVIKLPSGIKKKISLNCMATIGKICTFNVKKKLYKAGQNRWRGIRPTVRGVAMNPVDHPHGGGEGKTSGGRHPCSLWGIKTKGYKTKKK.

The interval 197 to 218 (VAMNPVDHPHGGGEGKTSGGRH) is disordered.

It belongs to the universal ribosomal protein uL2 family. In terms of assembly, part of the 50S ribosomal subunit. Forms a bridge to the 30S subunit in the 70S ribosome.

One of the primary rRNA binding proteins. Required for association of the 30S and 50S subunits to form the 70S ribosome, for tRNA binding and peptide bond formation. It has been suggested to have peptidyltransferase activity; this is somewhat controversial. Makes several contacts with the 16S rRNA in the 70S ribosome. This chain is Large ribosomal subunit protein uL2 (rplB), found in Carsonella ruddii (strain PV).